The primary structure comprises 265 residues: MNTYAQESKLRLKTKIGADGRCVIEDNFFTPPFKLMAPFYPKDDLAEIMLLAVSPGLMKGDVQDVQLNIGPNCKLRITSQSFEKIHNTEDGFASRDMHIVVGENAFLDFAPFPLIPFENAHFKGNTTISLHSSSQLLYSEIIVAGRVARNELFKFNRLHTKISILQDEKPIYYDNTILDPKTTDMNNMCMFDGYTHYLNLVLVNCPIELSSVRECIEESEGVDGAVSEIASSHLCVKALAKGSEPLLHLREKIARLTTQTITQKI.

This sequence belongs to the UreD family. In terms of assembly, ureH, UreF and UreG form a complex that acts as a GTP-hydrolysis-dependent molecular chaperone, activating the urease apoprotein by helping to assemble the nickel containing metallocenter of UreC. The UreE protein probably delivers the nickel.

It localises to the cytoplasm. Its function is as follows. Required for maturation of urease via the functional incorporation of the urease nickel metallocenter. The protein is Urease accessory protein UreH of Helicobacter pylori (strain G27).